A 122-amino-acid polypeptide reads, in one-letter code: Large ribosomal subunit protein uL18 (122 aa).

Belongs to the universal ribosomal protein uL18 family. In terms of assembly, part of the 50S ribosomal subunit; part of the 5S rRNA/L5/L18/L25 subcomplex. Contacts the 5S and 23S rRNAs.

Its function is as follows. This is one of the proteins that bind and probably mediate the attachment of the 5S RNA into the large ribosomal subunit, where it forms part of the central protuberance. In Desulfitobacterium hafniense (strain DSM 10664 / DCB-2), this protein is Large ribosomal subunit protein uL18.